The sequence spans 177 residues: Crossover junction endodeoxyribonuclease RuvC (177 aa).

Active-site residues include aspartate 8, glutamate 72, and aspartate 144. Residues aspartate 8, glutamate 72, and aspartate 144 each contribute to the Mg(2+) site.

Belongs to the RuvC family. As to quaternary structure, homodimer which binds Holliday junction (HJ) DNA. The HJ becomes 2-fold symmetrical on binding to RuvC with unstacked arms; it has a different conformation from HJ DNA in complex with RuvA. In the full resolvosome a probable DNA-RuvA(4)-RuvB(12)-RuvC(2) complex forms which resolves the HJ. The cofactor is Mg(2+).

The protein localises to the cytoplasm. It catalyses the reaction Endonucleolytic cleavage at a junction such as a reciprocal single-stranded crossover between two homologous DNA duplexes (Holliday junction).. The RuvA-RuvB-RuvC complex processes Holliday junction (HJ) DNA during genetic recombination and DNA repair. Endonuclease that resolves HJ intermediates. Cleaves cruciform DNA by making single-stranded nicks across the HJ at symmetrical positions within the homologous arms, yielding a 5'-phosphate and a 3'-hydroxyl group; requires a central core of homology in the junction. The consensus cleavage sequence is 5'-(A/T)TT(C/G)-3'. Cleavage occurs on the 3'-side of the TT dinucleotide at the point of strand exchange. HJ branch migration catalyzed by RuvA-RuvB allows RuvC to scan DNA until it finds its consensus sequence, where it cleaves and resolves the cruciform DNA. The polypeptide is Crossover junction endodeoxyribonuclease RuvC (Teredinibacter turnerae (strain ATCC 39867 / T7901)).